Reading from the N-terminus, the 132-residue chain is UPF0060 membrane protein SG1469 (132 aa).

The next 3 membrane-spanning stretches (helical) occupy residues 5 to 25 (VLLY…PYCY), 32 to 52 (LLLI…VLYP), and 60 to 80 (AAYG…IDGI).

This sequence belongs to the UPF0060 family.

It localises to the cell inner membrane. The chain is UPF0060 membrane protein SG1469 from Sodalis glossinidius (strain morsitans).